The primary structure comprises 812 residues: Eukaryotic translation initiation factor 3 subunit C (812 aa).

Residues 1–110 (MSRFFSSNYE…EESDEEDGKK (110 aa)) are disordered. Composition is skewed to acidic residues over residues 18–30 (SEED…EEDL) and 38–64 (SELD…DSDD). 3 positions are modified to phosphoserine: S98, S99, and S103. Positions 608–783 (YHQHINLDLI…TIFVVEKGDE (176 aa)) constitute a PCI domain.

The protein belongs to the eIF-3 subunit C family. As to quaternary structure, the eukaryotic translation initiation factor 3 (eIF-3) core complex is composed of TIF32, PRT1, NIP1, TIF34 and TIF35. A subcomplex of TIF32, NIP1 and PRT1 mediates the interaction with eIF-1, TIF5/eIF-5 and HCR1. The factors eIF-1, eIF-2, eIF-3, TIF5/eIF-5 and methionyl-tRNAi form a multifactor complex (MFC) that may bind to the 40S ribosome. TIF32, NIP1 and TIF5/eIF-5 comprise a minimal 40S-ribosome-binding unit. NIP1 interacts with TIF5/eIF-5 and SUI1.

The protein resides in the cytoplasm. Its function is as follows. Component of the eukaryotic translation initiation factor 3 (eIF-3) complex, which is involved in protein synthesis of a specialized repertoire of mRNAs and, together with other initiation factors, stimulates binding of mRNA and methionyl-tRNAi to the 40S ribosome. The eIF-3 complex specifically targets and initiates translation of a subset of mRNAs involved in cell proliferation. The chain is Eukaryotic translation initiation factor 3 subunit C from Saccharomyces cerevisiae (strain ATCC 204508 / S288c) (Baker's yeast).